The chain runs to 565 residues: NAD-dependent malic enzyme (565 aa).

Tyr-104 serves as the catalytic Proton donor. Arg-157 lines the NAD(+) pocket. Lys-175 serves as the catalytic Proton acceptor. Positions 246, 247, and 270 each coordinate a divalent metal cation. NAD(+)-binding residues include Asp-270 and Asn-418.

The protein belongs to the malic enzymes family. As to quaternary structure, homotetramer. Mg(2+) is required as a cofactor. It depends on Mn(2+) as a cofactor.

It catalyses the reaction (S)-malate + NAD(+) = pyruvate + CO2 + NADH. The enzyme catalyses oxaloacetate + H(+) = pyruvate + CO2. This Klebsiella pneumoniae (strain 342) protein is NAD-dependent malic enzyme.